A 190-amino-acid chain; its full sequence is Peptide deformylase (190 aa).

Fe cation-binding residues include Cys106 and His148. Residue Glu149 is part of the active site. His152 lines the Fe cation pocket.

It belongs to the polypeptide deformylase family. Fe(2+) serves as cofactor.

It catalyses the reaction N-terminal N-formyl-L-methionyl-[peptide] + H2O = N-terminal L-methionyl-[peptide] + formate. Functionally, removes the formyl group from the N-terminal Met of newly synthesized proteins. Requires at least a dipeptide for an efficient rate of reaction. N-terminal L-methionine is a prerequisite for activity but the enzyme has broad specificity at other positions. This Methylacidiphilum infernorum (isolate V4) (Methylokorus infernorum (strain V4)) protein is Peptide deformylase.